Reading from the N-terminus, the 360-residue chain is Photosystem II protein D1 1 (360 aa).

The next 3 membrane-spanning stretches (helical) occupy residues 29–46 (YVGW…AATV), 118–133 (HFLI…QWEL), and 142–156 (WICV…SATA). Residue His118 coordinates chlorophyll a. Tyr126 contacts pheophytin a. Residues Asp170 and Glu189 each coordinate [CaMn4O5] cluster. Residues 197–218 (FHMLGVAGVFGGSLFSAMHGSL) traverse the membrane as a helical segment. Residue His198 participates in chlorophyll a binding. A quinone is bound by residues His215 and 264-265 (SF). Residue His215 coordinates Fe cation. His272 contributes to the Fe cation binding site. Residues 274-288 (FLAAWPVIGIWFTAL) form a helical membrane-spanning segment. His332, Glu333, Asp342, and Ala344 together coordinate [CaMn4O5] cluster. Positions 345-360 (AGEVAPVALTAPAING) are excised as a propeptide.

Belongs to the reaction center PufL/M/PsbA/D family. In terms of assembly, PSII is composed of 1 copy each of membrane proteins PsbA, PsbB, PsbC, PsbD, PsbE, PsbF, PsbH, PsbI, PsbJ, PsbK, PsbL, PsbM, PsbT, PsbX, PsbY, PsbZ, Psb30/Ycf12, peripheral proteins PsbO, CyanoQ (PsbQ), PsbU, PsbV and a large number of cofactors. It forms dimeric complexes. The D1/D2 heterodimer binds P680, chlorophylls that are the primary electron donor of PSII, and subsequent electron acceptors. It shares a non-heme iron and each subunit binds pheophytin, quinone, additional chlorophylls, carotenoids and lipids. D1 provides most of the ligands for the Mn4-Ca-O5 cluster of the oxygen-evolving complex (OEC). There is also a Cl(-1) ion associated with D1 and D2, which is required for oxygen evolution. The PSII complex binds additional chlorophylls, carotenoids and specific lipids. serves as cofactor. Post-translationally, tyr-161 forms a radical intermediate that is referred to as redox-active TyrZ, YZ or Y-Z. In terms of processing, C-terminally processed by CtpA; processing is essential to allow assembly of the oxygen-evolving complex and thus photosynthetic growth.

The protein localises to the cellular thylakoid membrane. The catalysed reaction is 2 a plastoquinone + 4 hnu + 2 H2O = 2 a plastoquinol + O2. Photosystem II (PSII) is a light-driven water:plastoquinone oxidoreductase that uses light energy to abstract electrons from H(2)O, generating O(2) and a proton gradient subsequently used for ATP formation. It consists of a core antenna complex that captures photons, and an electron transfer chain that converts photonic excitation into a charge separation. The D1/D2 (PsbA/PsbD) reaction center heterodimer binds P680, the primary electron donor of PSII as well as several subsequent electron acceptors. The sequence is that of Photosystem II protein D1 1 from Nostoc sp. (strain PCC 7120 / SAG 25.82 / UTEX 2576).